The primary structure comprises 527 residues: Catalase (527 aa).

N-acetylalanine is present on Ala2. Ser9 is modified (phosphoserine). Lys13 is subject to N6-succinyllysine. Active-site residues include His75 and Asn148. Residues His194, Ser201, Arg203, and Asn213 each contribute to the NADP(+) site. N6-succinyllysine is present on Lys221. Lys233 carries the N6-acetyllysine modification. NADP(+)-binding residues include Lys237, Trp303, His305, and Lys306. Lys306 carries the N6-acetyllysine; alternate modification. Position 306 is an N6-succinyllysine; alternate (Lys306). Residue Tyr358 participates in heme binding. 2 positions are modified to phosphoserine: Ser417 and Ser422. The residue at position 480 (Lys480) is an N6-acetyllysine; alternate. Lys480 is modified (N6-succinyllysine; alternate). An N6-acetyllysine modification is found at Lys499. The residue at position 511 (Thr511) is a Phosphothreonine. A phosphoserine mark is found at Ser515 and Ser517. A Microbody targeting signal; atypical motif is present at residues 524–527; sequence KANL.

The protein belongs to the catalase family. As to quaternary structure, homotetramer. Interacts (via microbody targeting signal) with PEX5, monomeric form interacts with PEX5, leading to its translocation into peroxisomes. Heme serves as cofactor. NADP(+) is required as a cofactor.

It localises to the peroxisome matrix. It catalyses the reaction 2 H2O2 = O2 + 2 H2O. Its function is as follows. Catalyzes the degradation of hydrogen peroxide (H(2)O(2)) generated by peroxisomal oxidases to water and oxygen, thereby protecting cells from the toxic effects of hydrogen peroxide. Promotes growth of cells including T-cells, B-cells, myeloid leukemia cells, melanoma cells, mastocytoma cells and normal and transformed fibroblast cells. The polypeptide is Catalase (CAT) (Pongo abelii (Sumatran orangutan)).